A 255-amino-acid polypeptide reads, in one-letter code: 3-alpha-(or 20-beta)-hydroxysteroid dehydrogenase (255 aa).

Residue 10 to 34 (IITGGARGLGAEAARQAVAAGARVV) coordinates NAD(+). Ser-139 provides a ligand contact to substrate. Tyr-152 acts as the Proton acceptor in catalysis.

This sequence belongs to the short-chain dehydrogenases/reductases (SDR) family. Homotetramer.

It catalyses the reaction androstan-3alpha,17beta-diol + NAD(+) = 17beta-hydroxyandrostanone + NADH + H(+). It functions in the pathway lipid metabolism; C21-steroid hormone metabolism. This Streptomyces exfoliatus (Streptomyces hydrogenans) protein is 3-alpha-(or 20-beta)-hydroxysteroid dehydrogenase.